A 618-amino-acid polypeptide reads, in one-letter code: Citrolysin protein 1 (618 aa).

In terms of biological role, bacterial hemolysins are exotoxins that attack blood cell membranes and cause cell rupture by mechanisms not clearly defined. The polypeptide is Citrolysin protein 1 (Citrobacter freundii).